A 100-amino-acid polypeptide reads, in one-letter code: Urease subunit gamma (100 aa).

The protein belongs to the urease gamma subunit family. In terms of assembly, heterotrimer of UreA (gamma), UreB (beta) and UreC (alpha) subunits. Three heterotrimers associate to form the active enzyme.

It localises to the cytoplasm. It carries out the reaction urea + 2 H2O + H(+) = hydrogencarbonate + 2 NH4(+). The protein operates within nitrogen metabolism; urea degradation; CO(2) and NH(3) from urea (urease route): step 1/1. The polypeptide is Urease subunit gamma (Paracidovorax citrulli (strain AAC00-1) (Acidovorax citrulli)).